Reading from the N-terminus, the 75-residue chain is MSETVVVRVKPGSRKGPLVETADDGTLTIYVQERAVDGKANAAVTKLLAAHLGVPPSRVELASGATARLKRFRIS.

Belongs to the UPF0235 family.

The polypeptide is UPF0235 protein MSMEG_3845 (Mycolicibacterium smegmatis (strain ATCC 700084 / mc(2)155) (Mycobacterium smegmatis)).